The chain runs to 499 residues: Argininosuccinate lyase (499 aa).

The interval methionine 1–arginine 22 is disordered. The span at histidine 7 to arginine 22 shows a compositional bias: basic and acidic residues.

This sequence belongs to the lyase 1 family. Argininosuccinate lyase subfamily.

The protein localises to the cytoplasm. It catalyses the reaction 2-(N(omega)-L-arginino)succinate = fumarate + L-arginine. The protein operates within amino-acid biosynthesis; L-arginine biosynthesis; L-arginine from L-ornithine and carbamoyl phosphate: step 3/3. In Haloarcula marismortui (strain ATCC 43049 / DSM 3752 / JCM 8966 / VKM B-1809) (Halobacterium marismortui), this protein is Argininosuccinate lyase.